The sequence spans 150 residues: Large ribosomal subunit protein uL13 (150 aa).

It belongs to the universal ribosomal protein uL13 family. In terms of assembly, part of the 50S ribosomal subunit.

Functionally, this protein is one of the early assembly proteins of the 50S ribosomal subunit, although it is not seen to bind rRNA by itself. It is important during the early stages of 50S assembly. This is Large ribosomal subunit protein uL13 from Chlorobium phaeobacteroides (strain BS1).